We begin with the raw amino-acid sequence, 938 residues long: Isoleucine--tRNA ligase (938 aa).

Positions Pro58–His68 match the 'HIGH' region motif. Residue Glu566 coordinates L-isoleucyl-5'-AMP. Positions Lys607–Ser611 match the 'KMSKS' region motif. Lys610 lines the ATP pocket. Zn(2+) is bound by residues Cys906, Cys909, Cys926, and Cys929.

The protein belongs to the class-I aminoacyl-tRNA synthetase family. IleS type 1 subfamily. In terms of assembly, monomer. Zn(2+) serves as cofactor.

It is found in the cytoplasm. It catalyses the reaction tRNA(Ile) + L-isoleucine + ATP = L-isoleucyl-tRNA(Ile) + AMP + diphosphate. In terms of biological role, catalyzes the attachment of isoleucine to tRNA(Ile). As IleRS can inadvertently accommodate and process structurally similar amino acids such as valine, to avoid such errors it has two additional distinct tRNA(Ile)-dependent editing activities. One activity is designated as 'pretransfer' editing and involves the hydrolysis of activated Val-AMP. The other activity is designated 'posttransfer' editing and involves deacylation of mischarged Val-tRNA(Ile). This is Isoleucine--tRNA ligase from Desulfovibrio desulfuricans (strain ATCC 27774 / DSM 6949 / MB).